Reading from the N-terminus, the 488-residue chain is Aspartyl/glutamyl-tRNA(Asn/Gln) amidotransferase subunit B (488 aa).

This sequence belongs to the GatB/GatE family. GatB subfamily. As to quaternary structure, heterotrimer of A, B and C subunits.

It carries out the reaction L-glutamyl-tRNA(Gln) + L-glutamine + ATP + H2O = L-glutaminyl-tRNA(Gln) + L-glutamate + ADP + phosphate + H(+). The catalysed reaction is L-aspartyl-tRNA(Asn) + L-glutamine + ATP + H2O = L-asparaginyl-tRNA(Asn) + L-glutamate + ADP + phosphate + 2 H(+). Its function is as follows. Allows the formation of correctly charged Asn-tRNA(Asn) or Gln-tRNA(Gln) through the transamidation of misacylated Asp-tRNA(Asn) or Glu-tRNA(Gln) in organisms which lack either or both of asparaginyl-tRNA or glutaminyl-tRNA synthetases. The reaction takes place in the presence of glutamine and ATP through an activated phospho-Asp-tRNA(Asn) or phospho-Glu-tRNA(Gln). In Ralstonia pickettii (strain 12J), this protein is Aspartyl/glutamyl-tRNA(Asn/Gln) amidotransferase subunit B.